A 278-amino-acid chain; its full sequence is Undecaprenyl-diphosphatase 1 (278 aa).

The next 7 helical transmembrane spans lie at 46–66 (VVGF…VYFF), 91–111 (YTFT…GLAA), 119–139 (LASL…MWFA), 153–173 (SLPD…FPGF), 191–211 (VAAT…AGLY), 225–245 (PLAV…AWLL), and 256–276 (FIIY…GGAI).

Belongs to the UppP family.

It localises to the cell membrane. The catalysed reaction is di-trans,octa-cis-undecaprenyl diphosphate + H2O = di-trans,octa-cis-undecaprenyl phosphate + phosphate + H(+). Catalyzes the dephosphorylation of undecaprenyl diphosphate (UPP). Confers resistance to bacitracin. In Frankia alni (strain DSM 45986 / CECT 9034 / ACN14a), this protein is Undecaprenyl-diphosphatase 1.